The sequence spans 161 residues: Dihydrofolate reductase (161 aa).

The region spanning 2-161 is the DHFR domain; it reads NISLIAAISK…YNYSFEILSR (160 aa). A substrate-binding site is contributed by 6–8; the sequence is IAA. Residues 7 to 8 and 15 to 20 each bind NADP(+); these read AA and IGYKNK. Asp28 contacts substrate. NADP(+) is bound at residue 44-47; sequence GRLT. Position 59 (Arg59) interacts with substrate. Residues 64-66 and 96-101 contribute to the NADP(+) site; these read ISS and IGGAKI. Substrate is bound at residue Thr115.

It belongs to the dihydrofolate reductase family.

It carries out the reaction (6S)-5,6,7,8-tetrahydrofolate + NADP(+) = 7,8-dihydrofolate + NADPH + H(+). Its pathway is cofactor biosynthesis; tetrahydrofolate biosynthesis; 5,6,7,8-tetrahydrofolate from 7,8-dihydrofolate: step 1/1. In terms of biological role, key enzyme in folate metabolism. Catalyzes an essential reaction for de novo glycine and purine synthesis, and for DNA precursor synthesis. This is Dihydrofolate reductase (folA) from Buchnera aphidicola subsp. Acyrthosiphon pisum (strain APS) (Acyrthosiphon pisum symbiotic bacterium).